A 544-amino-acid chain; its full sequence is Prolyl 4-hydroxylase subunit alpha-3 (544 aa).

An N-terminal signal peptide occupies residues 1-19; sequence MGPGARLAALLAVLALGTG. Residues 107–131 are a coiled coil; the sequence is LEASENIRALKDGYEKVEQDLPAFE. One copy of the TPR repeat lies at 227–260; the sequence is EDALDHLAFAYFRAGNVSCALSLSREFLLYSPDN. N-linked (GlcNAc...) asparagine glycosylation occurs at Asn-242. The region spanning 422–529 is the Fe2OG dioxygenase domain; that stretch reads YAEYLQVVNY…KWVANKWIHE (108 aa). 2 residues coordinate Fe cation: His-440 and Asp-442. N-linked (GlcNAc...) asparagine glycosylation occurs at Asn-482. Residue His-510 coordinates Fe cation. Position 520 (Lys-520) interacts with 2-oxoglutarate.

The protein belongs to the P4HA family. Heterotetramer of two alpha-3 chains and two beta chains (the beta chain is the multi-functional PDI). Requires Fe(2+) as cofactor. It depends on L-ascorbate as a cofactor. N-glycosylation plays no role in the catalytic activity. In terms of tissue distribution, highly expressed in placenta, liver and fetal skin. Weakly expressed in fetal epiphyseal cartilage, fetal liver, fibroblast, lung and skeletal muscle. Expressed also in fibrous cap of carotid atherosclerotic lesions.

Its subcellular location is the endoplasmic reticulum lumen. The enzyme catalyses L-prolyl-[collagen] + 2-oxoglutarate + O2 = trans-4-hydroxy-L-prolyl-[collagen] + succinate + CO2. Catalyzes the post-translational formation of 4-hydroxyproline in -Xaa-Pro-Gly- sequences in collagens and other proteins. This chain is Prolyl 4-hydroxylase subunit alpha-3 (P4HA3), found in Homo sapiens (Human).